Reading from the N-terminus, the 365-residue chain is uncharacterized protein (365 aa).

Topologically, residues 1–133 (MVLAKQWVLK…RKLDKNKVGK (133 aa)) are cytoplasmic. A helical membrane pass occupies residues 134 to 154 (LWWYLSVLGGTSLTAYFIFFT). Over 155–169 (YAQLQEREEDYGKVY) the chain is Extracellular. The chain crosses the membrane as a helical span at residues 170–190 (LISGAAGAVGTVCIQLALNVF). Topologically, residues 191–365 (KASKVIAIAG…KLITKVNNEE (175 aa)) are cytoplasmic.

It localises to the membrane. This is an uncharacterized protein from Saccharomyces cerevisiae (strain ATCC 204508 / S288c) (Baker's yeast).